The following is a 644-amino-acid chain: MFQDNPLLAQLKQQLHSQTPRAEGVVKATEKGFGFLEVDAQKSYFIPPPQMKKVMHGDRIIAVIHSEKERESAEPEELVEPFLTRFVGKVQGKNDRLTIVPDHPLLKDAIPCRAARGLNHEFKEGDWAVAEMRRHPLKGDRSFYAELTQYITFGDDHFVPWWVTLARHNLEKEAPDGVATEMLDEGLVREDLTSLDFVTIDSASTEDMDDALFAKALPDDKLQLIVAIADPTAWIAEGSKLDKAAKIRAFTNYLPGFNIPMLPRELSDDLCSLRANEVRPVLACRMTLSADGTIEDNIEFFAATIESKAKLVYDQVSDWLENTGDWKPESEAIAEQVRLLAQICQRRGEWRHNHALVFKDRPDYRFILGEKGEVLDIVAEPRRIANRIVEEAMIAANICAARVLRDKLGFGIYNVHMGFDPANADALAALLKTHGLHVDAEEVLTLDGFCKLRRELDAQPTGFLDSRIRRFQSFAEISTEPGPHFGLGLEAYATWTSPIRKYGDMINHRLLKAVIKGETATRPQDEITVQMAERRRLNRMAERDVGDWLYARFLKDKAGTGTRFAAEIVDISRGGMRVRLVDNGAIAFIPAPFLHAVRDELVCSQENGTVQIKGETVYKVTDVIDVTIAEVRMETRSIIARPVA.

In terms of domain architecture, RNB spans 189–516 (REDLTSLDFV…NHRLLKAVIK (328 aa)). Residues 561-643 (GTRFAAEIVD…ETRSIIARPV (83 aa)) enclose the S1 motif domain.

The protein belongs to the RNR ribonuclease family. RNase II subfamily.

It localises to the cytoplasm. It catalyses the reaction Exonucleolytic cleavage in the 3'- to 5'-direction to yield nucleoside 5'-phosphates.. In terms of biological role, involved in mRNA degradation. Hydrolyzes single-stranded polyribonucleotides processively in the 3' to 5' direction. This chain is Exoribonuclease 2, found in Shigella flexneri serotype 5b (strain 8401).